The chain runs to 327 residues: Vacuolar protein sorting-associated protein 26A (327 aa).

The disordered stretch occupies residues 306 to 327 (RTNFHQRFESPESQASAEQPEM). A Phosphoserine modification is found at Ser-315. A compositionally biased stretch (polar residues) spans 316 to 327 (PESQASAEQPEM).

The protein belongs to the VPS26 family. In terms of assembly, component of the heterotrimeric retromer cargo-selective complex (CSC), also described as vacuolar protein sorting subcomplex (VPS), formed by VPS26 (VPS26A or VPS26B), VPS29 and VPS35. The CSC has a highly elongated structure with VPS26 and VPS29 binding independently at opposite distal ends of VPS35 as central platform. The CSC is believed to associate with variable sorting nexins to form functionally distinct retromer complex variants. The originally described retromer complex (also called SNX-BAR retromer) is a pentamer containing the CSC and a heterodimeric membrane-deforming subcomplex formed between SNX1 or SNX2 and SNX5 or SNX6 (also called SNX-BAR subcomplex); the respective CSC and SNX-BAR subcomplexes associate with low affinity. The CSC associates with SNX3 to form a SNX3-retromer complex. The CSC associates with SNX27, the WASH complex and the SNX-BAR subcomplex to form the SNX27-retromer complex. Interacts with VPS29, VPS35, SNX27, SNX1, SNX2, SNX5, SNX6, SNX3, RAB7A, ECPAS, EHD1, WASHC5, SORL1.

The protein localises to the cytoplasm. It is found in the endosome membrane. Its subcellular location is the early endosome. Functionally, acts as a component of the retromer cargo-selective complex (CSC). The CSC is believed to be the core functional component of retromer or respective retromer complex variants acting to prevent missorting of selected transmembrane cargo proteins into the lysosomal degradation pathway. The recruitment of the CSC to the endosomal membrane involves RAB7A and SNX3. The SNX-BAR retromer mediates retrograde transport of cargo proteins from endosomes to the trans-Golgi network (TGN) and is involved in endosome-to-plasma membrane transport for cargo protein recycling. The SNX3-retromer mediates the retrograde endosome-to-TGN transport of WLS distinct from the SNX-BAR retromer pathway. The SNX27-retromer is believed to be involved in endosome-to-plasma membrane trafficking and recycling of a broad spectrum of cargo proteins. The CSC complex seems to act as recruitment hub for other proteins, such as the WASH complex and TBC1D5. Required for retrograde transport of lysosomal enzyme receptor IGF2R. Required to regulate transcytosis of the polymeric immunoglobulin receptor (pIgR-pIgA). Required for the endosomal localization of WASHC2 (indicative for the WASH complex). Required for the endosomal localization of TBC1D5. Mediates retromer cargo recognition of SORL1 and is involved in trafficking of SORL1 implicated in sorting and processing of APP. Involved in retromer-independent lysosomal sorting of F2R. Involved in recycling of ADRB2. Acts redundantly with VSP26B in SNX-27 mediated endocytic recycling of SLC2A1/GLUT1. Enhances the affinity of SNX27 for PDZ-binding motifs in cargo proteins. This is Vacuolar protein sorting-associated protein 26A (VPS26A) from Bos taurus (Bovine).